Here is a 328-residue protein sequence, read N- to C-terminus: Phosphatidylglycerol--prolipoprotein diacylglyceryl transferase (328 aa).

3 helical membrane-spanning segments follow: residues 15–35 (VIQG…ILIS), 58–78 (FMFS…TLVY), and 106–126 (GMAI…IINT). Arg156 lines the a 1,2-diacyl-sn-glycero-3-phospho-(1'-sn-glycerol) pocket. 2 helical membrane-spanning segments follow: residues 242 to 262 (GFIF…IEYL) and 289 to 309 (ISMG…WVVV).

This sequence belongs to the Lgt family.

The protein resides in the cell inner membrane. The enzyme catalyses L-cysteinyl-[prolipoprotein] + a 1,2-diacyl-sn-glycero-3-phospho-(1'-sn-glycerol) = an S-1,2-diacyl-sn-glyceryl-L-cysteinyl-[prolipoprotein] + sn-glycerol 1-phosphate + H(+). Its pathway is protein modification; lipoprotein biosynthesis (diacylglyceryl transfer). Catalyzes the transfer of the diacylglyceryl group from phosphatidylglycerol to the sulfhydryl group of the N-terminal cysteine of a prolipoprotein, the first step in the formation of mature lipoproteins. The sequence is that of Phosphatidylglycerol--prolipoprotein diacylglyceryl transferase from Borrelia garinii subsp. bavariensis (strain ATCC BAA-2496 / DSM 23469 / PBi) (Borreliella bavariensis).